Consider the following 182-residue polypeptide: Large ribosomal subunit protein bL25 (182 aa).

It belongs to the bacterial ribosomal protein bL25 family. CTC subfamily. In terms of assembly, part of the 50S ribosomal subunit; part of the 5S rRNA/L5/L18/L25 subcomplex. Contacts the 5S rRNA. Binds to the 5S rRNA independently of L5 and L18.

This is one of the proteins that binds to the 5S RNA in the ribosome where it forms part of the central protuberance. This Borrelia garinii subsp. bavariensis (strain ATCC BAA-2496 / DSM 23469 / PBi) (Borreliella bavariensis) protein is Large ribosomal subunit protein bL25.